A 297-amino-acid polypeptide reads, in one-letter code: tRNA (guanine-N(7)-)-methyltransferase (297 aa).

Residues Gly101, 124 to 125 (EI), 171 to 172 (NT), and Cys191 each bind S-adenosyl-L-methionine. The active site involves Asp194. Residue 270 to 272 (TEE) coordinates S-adenosyl-L-methionine.

The protein belongs to the class I-like SAM-binding methyltransferase superfamily. TrmB family. In terms of assembly, forms a complex with trm82.

The protein localises to the nucleus. It catalyses the reaction guanosine(46) in tRNA + S-adenosyl-L-methionine = N(7)-methylguanosine(46) in tRNA + S-adenosyl-L-homocysteine. Its pathway is tRNA modification; N(7)-methylguanine-tRNA biosynthesis. Catalyzes the formation of N(7)-methylguanine at position 46 (m7G46) in tRNA. This Aspergillus niger (strain ATCC MYA-4892 / CBS 513.88 / FGSC A1513) protein is tRNA (guanine-N(7)-)-methyltransferase (trm8).